A 325-amino-acid chain; its full sequence is Malate dehydrogenase (325 aa).

Position 11–17 (11–17) interacts with NAD(+); sequence GAAGHVS. The substrate site is built by arginine 92 and arginine 98. NAD(+) contacts are provided by residues asparagine 105, glutamine 112, and 129-131; that span reads VGN. Residues asparagine 131 and arginine 162 each contribute to the substrate site. Residue histidine 187 is the Proton acceptor of the active site.

It belongs to the LDH/MDH superfamily. MDH type 2 family.

The catalysed reaction is (S)-malate + NAD(+) = oxaloacetate + NADH + H(+). Catalyzes the reversible oxidation of malate to oxaloacetate. The polypeptide is Malate dehydrogenase (Desulfotalea psychrophila (strain LSv54 / DSM 12343)).